A 6199-amino-acid polypeptide reads, in one-letter code: MPAVLALSGLLLMLLTVSVRSESAELRFQGQTQFVVNESSRAIVRLVVERVGDPINVTALVLLQGDDTGDFEATTAAAFLLSSESSKTIFIAVKDDDIPEADETFVFILRLQSSSNGVTVGTPNTATITILSNDNAFGIISFNSSSLITVEESKGRSQYVPLTLLREKGTYGTVTVNFEIFGGPNPASEDLSPDMGNITFPPGRSVVVFSIMIQDDKLPEDDEIFTVQLTEAAGGALLNPNRSSVQIKISRNDAPIRFSKSTLVVPENIGVISLTVTRGRTEDGLLIGSDDKTVSVAYAIITGNGAASATPLTDFVDLQTERMVVFLPGVHEADLRFSIRDDNIPEIAESFQVVLLEETLLGDAVLVTPSLTLVTIEPNDKPYGVLSISPSPIQPHIINEDLNLIYEGMIIVRNGGTHGAVSVQWNITRNSTDRSPVSADLNPAAGTLRFSEGQMSAVLPLNITQDSLPEEAEAFLLKLIPGSVQGGAEVDEPMEMVFFIQDSDDVYGRFGFHPRENQSIQSQPEGRFLSLSFLREGGTLGEVRLTLTALYIPARPLDPSRARDGVLNGTSVNTVLFSSGQSRAQLILPIRNDAFLQNGAHFRIQLDSVELVNITPPIPSMSPRFAGALNISLIITPDIANGEIGFTSNQTVVALEPEDSNSSLITLQLRRDGTDGQAVVFWSLRPTGENKEDVTKGDISPFTGSVTFLSGQSEAVINLTVLADNIPEINETIILTLDRTNVDNQILKPGFTSREIVILENDDPGGVFEFSPVSKGPWFINEGETVELRVIRAQGQLLNQLIRYTVIPSGTAQFYGATGILEFQPGEREVMVALVAKPDGIPELDETFSVVLSSYSTPASRLGNRREVNITVRKSDDPFGVIEFIQPDLDFTINESKALGCLLSILPPLEKSRGRFGNVSIFWILEPTYSGDVKPVQGEIVFAEGEYQKNLTLSSVADEIPEKTENFTITLLNATGGARLGNILSARLSIRANDDPIYFAEPVGQRVREGGVANFTILRAGLANFVTTVNYRFEYGDTSSEDFIPESNDTMLVFHFGEWMKNISVAVVDDNIPETDEPFYIVLFNATGDAVVYGQITATVVIEANDDANGIFSLDSAQKPGEEGKTNNFYVLRDRGHFGNVTIYWQLFANDTPLEPYQEFVNTSGFITFRTGEKTKPIVLEVISDKLPEFNEFYELRLMNVSGGYPGEGGKLANRDLNASVLIPFNDDPFGVFAIAPDSLEREVAEDVLSVNDMTSVTSLTILRQQGTFGDVRVAWEILSGAFPRGLPPMEDLILMASFPSAVELQPHSRRRHAGTDALFFSGRPGAYGSISAETTLLVPQILANFTLSVWLKPKPNTDGFVVSKGNGNGTVYYGVQVQTNDSHVTIMLHYTTIGSNSTHVARATANTFVEDAWVHVIIAVEDGIIEFYLDGSPIPGGIKSLKGEAIVNDATPIRIGSNPDGEQRFTGLLQDVRLYSSCLNRSQIHELHNQPAKTDLHNVSGYLTYRQEEKEKSFLVEVRDDQEAEGEEVFYLQLVAVQGGARLPMPRPTAILKVMKSDNANGLFSFTGACIPDIAEEGSMISCVVERTRGALDYVYVNYTVTQLDSPADLSNASDFANATGFILFQPGQLSEVLNLLVVNDDLPEVDEHFRVRLVSAKSGDGKPGSTPTSGASIDPEKAVNNVTVKASDHPYGLLQFQTTPVPVGMIRPALEEARVTVQEEAGVVRLLVARAQGLLGRVMVGYRTSPFTAAGSEDYEGFLDFLPGERFKYINVTIIDNSVPELDKVFRVELYNPNGGVDPYFASEGSGSGESETDFFLPSFHYHHANLGAAARIIVTIAASDEAHGVFQFGADSLIVNGTEPEEGRSTVVLQVIRTFGALSNVTVYWEADAASEGELVYRSGNVNFEVGQTVRSIYLLISQDDVPELDKTFKVRLTNASHGRLGKETTATLTVLASDDPYGLFVFSDNTRPVRVAEANALVALTIQRRKGLMGRVRVAYRTLRDTDTVLYSTPGVGRASEGNDFIAVVDSVIFSANQSEVNVTLRVLDDNEPERAESVFLELVSVTLIEGLQPRPVALSPRLGPRNVTIAQVIIEASDDAFGVLQLSSSAVSVPEYYTGPIINVTRIGGIFADVSVKFRAVPLTARVGEDYRVASSDVVLLEGESSKPVPILIINDVVPELEETFRIELLNQTTGGALLGDLTQAIITILPSDDPFGLFVFQAAPITIEEPALTAFEVSVPIVRNAGTMGDVAVQWRATVNGRPATGDLRPVSGEVMFSPGETLKTLKVEVLPDDVPEIEEIIKVELVSATSGGNIGLEKVVDTIVPANDNPHGTVYFEQAVYRVQEPLEGIYIANVTIRRSGGNFGMLEVVYSTLEVDIVSNALKEGRNFLVYYDSRLAGVPSNAIRRPINITTSTNVLNFCAAFCLRERACQAFSFTNTTTPSCFWVTSGVSQLSPSPQTFTYLKNTTATASLFSSQAVAGSDFITMTAQTTTMLDGSGVANLTVPILTDSLPEMDESFIIKILKVSLVNVTATARNLPTIRQPDTALVTIGMNGDAFGIFLLYSINPNATQEGLYLEVREEPKTTVLLVIERRGGSMGQVTVEWKYVGGSATPNADFNGTGETLIFAEGDVKKTLEFIITDDTEPENNETLQIGLVSTEGGSRILPSSDTVTILILANDNAAGVVGFHTASRSRIVREGESVTLLVERTAPAIGNVAVDWRIEGPLVPTTFADTSGTLFFSEGILNNTIVLKLLEDTTPEDREEYRVILSNIQTTGVTKTGIAALSAQGREAVVSVEASDEPFGLLSIAPSSLQVTTDEKNTTIRIYINREFGASGAVNISYETVRGSLQDLRQTEGALAQPGQDFRYVSNSVIMQDGQTSVSIPITIIDDDIPELQEFFLVNITSAVLITTLPTAPKLNTEGLVAEIIINANDGIRGIIGWQNIDYVVNETIGVLTLVAYRDAGTYGNVSLFFYAQNLEAQLGLDFNATPSMIYFVDGERHKFIEVQILDDAVPEGGETFQLILANPSAGLQLGENTTATVMILANDDGHGIISFNNSEHFLLREPTSVSGLGTSVATLYIIRDPPQGTFGTVTVQFTITDVNGSLYTDDLTPSSGFVVLEDGVRYKTLEIWAVLDAEPEMNETFTVTLSNPTGGARLGVSLQTFITVLENQAPLGLFRISPSINRTLDTMTVEEHMGTVFLTVSRSNGLESAVSVEWETRSGTAFGMRGEQPVLAVYQSIRDSFASVWCSVPSGDAALVLRLIKGLTQNQTVLYKWQGVFVPVEFVSIQNPKSCVGFTVNGSSYVAVSHADNTVSLTTNISLFRVQADLNLTLEQTFSVSGFSVKHFSTDLKQYLIASSEIFVWNRGSFFLHQSLELQDIIAAVPFRRGSSNVQHLAVCRNRTSAACFIYQWTDGRFQNPQPLALNTEVKQVESHQMGGDTFLFIVTEGLNPACEVFLWGSQQTVFQQTQSILVPGLFSVHPFTTPSGIFHLLLAGVNGSALYSWRSELRQFAEMLKSASAQEFLYLPVPSINSPKSLILASGKSSSLVYELTSVSNQSDFIPSSGELFFQPGVQELEIAVNVIDDDVPEEEEHFRVSLKNPKGGAEIGFRGQVTFFIPANDDTYGIIGFSQNSLMREVEELQSDNPVSLSIERRRGRFGRLTVHWSAYGSLDDIFPTSGVVTFSESQAVATISLNVLADDIPELAEKVTIVLTKVTTIGIIDPSRGASIDYQRAQANLTIRANGSPYGVIGWHLDSQYFITPEPQKSPSNITLSIVRDQGSSGNVLVYYSTKPALHLLPLNQASGGTDYVAKEATVVMMENATVVLVFLTILPDDIPELAETFFVNITRVEVLGGDTGAAQPSVKRPGLEIAEVTIQENDDPRGVLSFNVSKDVSGAVLAFEVPSPGNVLRLAVMRMAGIFGRLVLYWETQSVTASTEDFTPSSGNITFQDGQAMAYIEITIIDDTIVESTETFMVKLIRVIGGARLGVETSVVVSIPANDSPFGRFGFEELKVSVSEPQFLNDPASVATLTVVRSSGGEGVVHLIWLLQEESRDDLSPRNGTLIFNGTESKKTLVIQALADAVLEGEESFTIQLLSPKNEPVIDPVRGVATVVIRPDVGALGTVGIADSSRNVLIGEPICSYNGTALISLIRGPGIFGEIEIFWNITTAAVSEFEETSGKVVMKDRQSAATIQLKALDDEIPEERRVYQLRLSSLTPGSVINPDRQFASITMAASDLPHGLFSFSQASLRATEEDRAVNVTIVRSMGLFGSVWVSFHTEGRTAISGQDFGQSSGRPLFRPGESSRVIPLVIFDDDLPEGPEEFFLNITLVELLNASSMDFTVREYGLQIDQPPAIGNLSSLMVIIQKNDNAEGILEFDPKYVNNTVEEDVGTLSIPVLRRVGSYGQVTVQFVSKGLTAQPDSDYILLNGSITFQHGQTLSYINVSIVDDTESEFNEIFELQLTGATGGAILGAQLIARITIAKSDSPNGVVRFINQSAITIPNPNSTVRLSLFAERADGLLGDATVMWHIQGPNSNEVLPSMNTDIEPVNGTFSFRDGEGGVRSIDLKILPHGEVEVTEKFIIMLSVISGEMGVDPRAGSVTLTIEKFGDPNGIVQFTEQDLKERIYSEPSDSEGPLKVSVLVTRREGVMGNITVFWEILSDADTSGDFAALRGSVIILAGQRLAEIILTLLPDSVPELEETYTLRLTSVEGGAELDLNRSSTRLKVRANDEPHGVFVMYSQNQSVVVNAADRSRQLIISVNRLAGAFGNASVGYRISFTTPGQSFTEDTITGNILVKDGEREASIRVPVSSQVFFVTGFNFSVELTDVTLIGPLLGSPPRIQLESKLAVVSVPEVAANPVVGFASLALRVLDIESGQCEALVTRTGLYGNITVRWSSGFPPGQTPPGYQPGEILPRSGSIMLAHGQRSELISFTALNNISVVTAHAIYLTSVESESPGGARLRTGYTVAEVEPLGLYQFHPNSQHLVIEEDVQTITLYVQRFYGFRSNRSSVSYRTWPGTAQPDKDYVPVTDGQLLFDSRQTSASIRLSILDDTLTEPDEDFYVNLTSVRVLSTTLPLITAQPGIVQKNSISTVTIRANDVVSGFLSIGPAVKLISEDSVEDSPQQKLQLRVRRTAGLSGVVSAKIRAYAGLKTPLVDASQFHREHKGTWALEGEDFALETQSVTLLEGQNEVEVTVIMLNDQEPEGQEAFFIYLSDAEGGAQIVSVPDELGFTSFAKIIILGSDLQNGIVGFSLSSLSGQVLDEDSVNRTVTLVLQRQENRAFEDVLVFWRVTFSTTDHALVSHGVDLSKELLQTSGTSIRRKGEVLCALKLEVQPDKNPEYEVWFLVEVYKVGEGAAINQTARFANITMLESDDPRGLVYFAQGSRLPVVTLKATSVSLQIYRDASTASSISVEYRMQELPKVESIGPSLVWPAVAGQDFVMSEGTLTFEIGQSSAGLNIDLTPNIGSSNLTPKRFQVVLSDATGGARVHPEFGLANVTLVSDTETQAVWALLDQLHQPLEETIINRVLHALINKVSRDITPEQLMAVLDASSKILSDAEQTPLKDSSRGLTYDLLCAMANPNRTDTQGVSQLSEVAERFAYSLLTDIKCGAEGKRGITILDNCPYFTIAAHHWYPMQINGHTFIGKNTDTFTLPETLLEVPALPADSTAPSACYKVHFTEYSTEHWFLTNKKPSALNGKVFSVSLYGRGSKPLSEGQEVVYRIHTPDRRGKPKPSQSLCLLWNQAAESWLSDGQFCRLVDDTQNYVECACSHLSIYTAYAEIESLASFNEAFYAAGFICISGFALAMVSHLMCARFLMFAAKLLTHMMVACLGTQICFLVSAFRGRMFSEDSCAALGLFFHYFHLSQFGWMLVQAINFWQILVMNDEHTERRYLLYFLLSWGLPALVIIVLVVVLLGGFGWSIHSVYGLVQGDLCFIPNVYAALCTAALVPLICLVGVLVIFIHAYQVTQQWKAYDDIYRGRTNSSEVPMMLYLFALVTLVCVWAGLHMAYRYIWMLILLVIFNIFLGLYVFSVYFVMHNQLFWPGKATYTVEMNGHSSPDSIYQSTGAATVGGGEISKSTQNLISAMEEISADWERASLRPSSQPSSIFKPSPQDEAYITEGGFINTSLVRDEESQEFDDLIFALKTGSGLNVSDNESIHGSHDGGSMANSQIVELRRIPIADTHL.

An N-terminal signal peptide occupies residues 1–23; sequence MPAVLALSGLLLMLLTVSVRSES. Calx-beta domains lie at 24-109, 126-230, 249-355, 380-480, 637-737, 753-853, 869-972, 997-1083, 1099-1199, 1434-1534, 1563-1655, 1835-1937, 1963-2063, 2092-2190, 2208-2308, 2425-2525, 2582-2659, 2673-2773, 2814-2908, 2931-3029, and 3054-3154; these read AELR…VFIL, ATIT…VQLT, ISRN…QVVL, DKPY…LKLI, PDIA…ILTL, SREI…VVLS, NITV…ITLL, IYFA…YIVL, TVVI…LRLM, PIPG…FYLQ, GLFS…RVRL, IIVT…VRLT, LFVF…FLEL, QVII…RIEL, ITIL…KVEL, AAFC…FIIK, VREE…QIGL, DTVT…RVIL, PSSL…LVNI, EIII…QLIL, and GHGI…TVTL. At 24–5803 the chain is on the extracellular side; it reads AELRFQGQTQ…IESLASFNEA (5780 aa). 6 EAR repeats span residues 3239-3284, 3285-3333, 3336-3372, 3374-3420, 3422-3467, and 3471-3513; these read VLAV…KWQG, VFVP…RVQA, NLTLEQTFSVSGFSVKHFSTDLKQYLIASSEIFVWNR, SFFL…QWTD, RFQN…LWGS, and VFQQ…SWRS. Calx-beta domains lie at 3562 to 3605, 3619 to 3719, 3778 to 3854, 3916 to 3985, 4000 to 4103, 4120 to 4220, 4247 to 4335, 4371 to 4471, 4493 to 4593, 4615 to 4715, 4993 to 5076, 5125 to 5225, and 5260 to 5360; these read SNQS…RVSL, QVTF…TIVL, ITLS…FVNI, VLRL…MVKL, VVVS…IQLL, VVIR…QLRL, HGLF…FLNI, VIIQ…LQLT, DSPN…IIML, KFGD…TLRL, QHLV…VNLT, SEDS…IYLS, and VGFS…LVEV. Residues 5636 to 5801 enclose the GAIN-B domain; it reads PYFTIAAHHW…AEIESLASFN (166 aa). 2 disulfide bridges follow: Cys5751-Cys5780 and Cys5768-Cys5782. The interval 5751 to 5801 is GPS; that stretch reads CLLWNQAAESWLSDGQFCRLVDDTQNYVECACSHLSIYTAYAEIESLASFN. The helical transmembrane segment at 5804–5824 threads the bilayer; the sequence is FYAAGFICISGFALAMVSHLM. Topologically, residues 5825 to 5834 are cytoplasmic; it reads CARFLMFAAK. Residues 5835-5855 form a helical membrane-spanning segment; that stretch reads LLTHMMVACLGTQICFLVSAF. The Extracellular portion of the chain corresponds to 5856-5864; the sequence is RGRMFSEDS. A helical transmembrane segment spans residues 5865 to 5885; it reads CAALGLFFHYFHLSQFGWMLV. Topologically, residues 5886-5908 are cytoplasmic; that stretch reads QAINFWQILVMNDEHTERRYLLY. Residues 5909–5929 form a helical membrane-spanning segment; sequence FLLSWGLPALVIIVLVVVLLG. Residues 5930–5954 are Extracellular-facing; it reads GFGWSIHSVYGLVQGDLCFIPNVYA. A helical transmembrane segment spans residues 5955–5975; sequence ALCTAALVPLICLVGVLVIFI. Over 5976–6001 the chain is Cytoplasmic; sequence HAYQVTQQWKAYDDIYRGRTNSSEVP. The helical transmembrane segment at 6002-6022 threads the bilayer; that stretch reads MMLYLFALVTLVCVWAGLHMA. The Extracellular portion of the chain corresponds to 6023–6025; that stretch reads YRY. The helical transmembrane segment at 6026–6046 threads the bilayer; the sequence is IWMLILLVIFNIFLGLYVFSV. Topologically, residues 6047–6199 are cytoplasmic; it reads YFVMHNQLFW…RRIPIADTHL (153 aa).

It belongs to the G-protein coupled receptor 2 family. Adhesion G-protein coupled receptor (ADGR) subfamily. As to quaternary structure, heterodimer of 2 chains generated by proteolytic processing; the large extracellular N-terminal fragment and the membrane-bound C-terminal fragment predominantly remain associated and non-covalently linked. In terms of processing, autoproteolytically processed at the GPS region of the GAIN-B domain; this cleavage modulates receptor activity.

It is found in the cell membrane. The protein resides in the cell projection. It localises to the stereocilium membrane. The protein localises to the photoreceptor inner segment. Functionally, receptor that may have an important role in the development of the sensory nervous system. This Danio rerio (Zebrafish) protein is Adhesion G-protein coupled receptor V1 (adgrv1).